A 311-amino-acid chain; its full sequence is MGFKHKDIIGLQDLTREEIQLLLDTADNMKEINSRDIKKVPTLRGKTVVNVFYEASTRTRTSFEIAAKRLSADTINISASTSSVTKGETLSDTARNILAMKPDIIVMRHAASGAHHYLAQRVSCSVINAGDGAHEHPSQGLLDMLTMRQKFGTIEGLTVAIVGDITHSRVARSDIFGLTKMGAHVRLAGPPTMMPPGIERLGNVTVCRDMREAIEGVDVVMMLRIQLERQGKTLLPTLREYARYYGLNPQNLKLAKPGAMVMHPGPINRGVELSSYVADSDQSAILTQVENGVAVRMAMLYHVSGGELATE.

Residues Arg-58 and Thr-59 each coordinate carbamoyl phosphate. Lys-86 serves as a coordination point for L-aspartate. Carbamoyl phosphate is bound by residues Arg-108, His-136, and Gln-139. Residues Arg-169 and Arg-224 each coordinate L-aspartate. Residues Gly-265 and Pro-266 each contribute to the carbamoyl phosphate site.

It belongs to the aspartate/ornithine carbamoyltransferase superfamily. ATCase family. As to quaternary structure, heterododecamer (2C3:3R2) of six catalytic PyrB chains organized as two trimers (C3), and six regulatory PyrI chains organized as three dimers (R2).

The catalysed reaction is carbamoyl phosphate + L-aspartate = N-carbamoyl-L-aspartate + phosphate + H(+). Its pathway is pyrimidine metabolism; UMP biosynthesis via de novo pathway; (S)-dihydroorotate from bicarbonate: step 2/3. Functionally, catalyzes the condensation of carbamoyl phosphate and aspartate to form carbamoyl aspartate and inorganic phosphate, the committed step in the de novo pyrimidine nucleotide biosynthesis pathway. This Geobacter sulfurreducens (strain ATCC 51573 / DSM 12127 / PCA) protein is Aspartate carbamoyltransferase catalytic subunit.